The chain runs to 697 residues: Elongation factor G (697 aa).

Residues 8-290 enclose the tr-type G domain; that stretch reads ERYRNFGIMA…AVVDYLPSPL (283 aa). GTP is bound by residues 17–24, 88–92, and 142–145; these read AHIDAGKT, DTPGH, and NKLD.

Belongs to the TRAFAC class translation factor GTPase superfamily. Classic translation factor GTPase family. EF-G/EF-2 subfamily.

The protein resides in the cytoplasm. In terms of biological role, catalyzes the GTP-dependent ribosomal translocation step during translation elongation. During this step, the ribosome changes from the pre-translocational (PRE) to the post-translocational (POST) state as the newly formed A-site-bound peptidyl-tRNA and P-site-bound deacylated tRNA move to the P and E sites, respectively. Catalyzes the coordinated movement of the two tRNA molecules, the mRNA and conformational changes in the ribosome. The polypeptide is Elongation factor G (Sphingopyxis alaskensis (strain DSM 13593 / LMG 18877 / RB2256) (Sphingomonas alaskensis)).